Consider the following 480-residue polypeptide: Prostacyclin synthase (480 aa).

A helical transmembrane segment spans residues Met1–Arg21. Substrate contacts are provided by residues Arg104, Leu110, Asn277, Thr338–Arg339, and Arg362. Cys421 contributes to the heme binding site.

Belongs to the cytochrome P450 family. Requires heme as cofactor.

It localises to the endoplasmic reticulum membrane. The enzyme catalyses prostaglandin H2 = prostaglandin I2. It catalyses the reaction a hydroperoxyeicosatetraenoate = an oxoeicosatetraenoate + H2O. It carries out the reaction (15S)-hydroperoxy-(5Z,8Z,11Z,13E)-eicosatetraenoate = 15-oxo-(5Z,8Z,11Z,13E)-eicosatetraenoate + H2O. The catalysed reaction is (15S)-hydroperoxy-(5Z,8Z,11Z,13E)-eicosatetraenoate + AH2 = (15S)-hydroxy-(5Z,8Z,11Z,13E)-eicosatetraenoate + A + H2O. In terms of biological role, catalyzes the isomerization of prostaglandin H2 to prostacyclin (= prostaglandin I2). Catalyzes the biosynthesis and metabolism of eicosanoids. Catalyzes the isomerization of prostaglandin H2 to prostacyclin (= prostaglandin I2), a potent mediator of vasodilation and inhibitor of platelet aggregation. Additionally, displays dehydratase activity, toward hydroperoxyeicosatetraenoates (HPETEs), especially toward (15S)-hydroperoxy-(5Z,8Z,11Z,13E)-eicosatetraenoate (15(S)-HPETE). The protein is Prostacyclin synthase of Danio rerio (Zebrafish).